The following is a 393-amino-acid chain: MLSILLTLLLSKYALGHEVWFSETFPNESIENWVQSTYNAEKQGEFKVEAGKSPVDPIEDLGLKTTQDARFYGIARKISEPFSNRGKTMVLQFTVKFDKTVSCGGAYIKLLGSDIDPKKFHGESPYKIMFGPDICGMATKKVHVIFNYKGKNHLIKKEIPCKDDLKTHLYTLIVNPNNKYEVLVDNAKVEEGSLEDDWDMLPPKKIDDPNDKKPDDWVDEQFIDDPDDKKPDNWDQPKTIPDMDAKKPDDWDDAMDGEWERPQKDNPEYKGEWTPRRIDNPKYKGEWKPVQIDNPEYKHDPELYVLNDIGYVGFDLWQVDSGSIFDNILITDSPDFAKEEGERLWRKRYDAEVAKEQSSAKDDKEEAEETKERKELPYDAKASDEPSGDHDEL.

The N-terminal stretch at 1–16 (MLSILLTLLLSKYALG) is a signal peptide. Asn27 is a glycosylation site (N-linked (GlcNAc...) asparagine). Cys103 and Cys135 are joined by a disulfide. The an alpha-D-glucoside site is built by Tyr107, Lys109, Tyr126, and Asp133. 7 tandem repeats follow at residues 189–200 (VEEGSLEDDWDM), 208–219 (DPNDKKPDDWVD), 225–236 (DPDDKKPDNWDQ), 242–253 (DMDAKKPDDWDD), 257–267 (GEWERPQKDNP), 271–281 (GEWTPRRIDNP), and 285–295 (GEWKPVQIDNP). Positions 189 to 253 (VEEGSLEDDW…DAKKPDDWDD (65 aa)) are 4 X 12 AA approximate repeats. The disordered stretch occupies residues 194–277 (LEDDWDMLPP…EYKGEWTPRR (84 aa)). Over residues 202–216 (PPKKIDDPNDKKPDD) the composition is skewed to basic and acidic residues. Acidic residues predominate over residues 217–226 (WVDEQFIDDP). Basic and acidic residues-rich tracts occupy residues 227 to 249 (DDKK…KKPD) and 258 to 277 (EWER…TPRR). Residues 257 to 295 (GEWERPQKDNPEYKGEWTPRRIDNPKYKGEWKPVQIDNP) form a 3 X 11 AA approximate repeats region. An alpha-D-glucoside is bound at residue Asp315. The tract at residues 351–393 (AEVAKEQSSAKDDKEEAEETKERKELPYDAKASDEPSGDHDEL) is disordered. The Prevents secretion from ER motif lies at 390–393 (HDEL).

This sequence belongs to the calreticulin family.

The protein localises to the endoplasmic reticulum lumen. Its function is as follows. Molecular calcium-binding chaperone promoting folding, oligomeric assembly and quality control in the ER via the calreticulin/calnexin cycle. This lectin may interact transiently with almost all of the monoglucosylated glycoproteins that are synthesized in the ER. In Schistosoma mansoni (Blood fluke), this protein is Calreticulin.